The sequence spans 602 residues: Putative ankyrin repeat protein L100 (602 aa).

ANK repeat units lie at residues 133-162, 269-294, 295-324, 325-354, 355-384, 386-414, 416-444, 445-474, 476-504, 506-534, and 536-566; these read VLFYLLKTNLNENRLRIVEHIFKNPSSLIS, YLEKIFSLSCKYHDSRIAEILIKKSI, NKERCLISACEAGFLEIVECLVKQDVNINL, LKGTPLVTACQFGHLLIVDFLVNNSADIHI, RDNAPILYACRYGHVDIVDYLIGKGIDIHT, SSQALINACNRGHLNVMELLVEKGADIRS, ENILVVEACRNTNADILRFLVRIGVDVLS, KGVEPLIVACERGQLAIVQYLIDIGIDICA, DNEALIKSCRSGFANIVNLLIENGADVKA, DNEALIIACEKCNHTIVTILVSNGADITA, and NNEALIRACHNEAVGKYFIDFLIEKGADVHA.

This Acanthamoeba polyphaga mimivirus (APMV) protein is Putative ankyrin repeat protein L100.